Reading from the N-terminus, the 108-residue chain is MVRVKNVKMYKKRSLQLIRLAIELAKNNNIELARMYIKLALLYSRKLKFKIPIEYKRLFCRKCFTPLIIGITERRRIKNKVLVRTCLYCGWTRRYKLQYKTTNKKSKS.

Cys60, Cys63, Cys86, and Cys89 together coordinate Zn(2+).

The protein belongs to the eukaryotic/archaeal RNase P protein component 4 family. In terms of assembly, consists of a catalytic RNA component and at least 4-5 protein subunits. It depends on Zn(2+) as a cofactor.

Its subcellular location is the cytoplasm. It catalyses the reaction Endonucleolytic cleavage of RNA, removing 5'-extranucleotides from tRNA precursor.. In terms of biological role, part of ribonuclease P, a protein complex that generates mature tRNA molecules by cleaving their 5'-ends. The sequence is that of Ribonuclease P protein component 4 from Sulfurisphaera tokodaii (strain DSM 16993 / JCM 10545 / NBRC 100140 / 7) (Sulfolobus tokodaii).